Consider the following 266-residue polypeptide: Thymidylate synthase (266 aa).

DUMP is bound at residue R24. (6R)-5,10-methylene-5,6,7,8-tetrahydrofolate is bound at residue H54. 129-130 (RR) serves as a coordination point for dUMP. The active-site Nucleophile is C149. DUMP-binding positions include 169–172 (RSAD), N180, and 210–212 (HIY). Position 172 (D172) interacts with (6R)-5,10-methylene-5,6,7,8-tetrahydrofolate. Residue A265 coordinates (6R)-5,10-methylene-5,6,7,8-tetrahydrofolate.

Belongs to the thymidylate synthase family. Bacterial-type ThyA subfamily. As to quaternary structure, homodimer.

Its subcellular location is the cytoplasm. The enzyme catalyses dUMP + (6R)-5,10-methylene-5,6,7,8-tetrahydrofolate = 7,8-dihydrofolate + dTMP. Its pathway is pyrimidine metabolism; dTTP biosynthesis. In terms of biological role, catalyzes the reductive methylation of 2'-deoxyuridine-5'-monophosphate (dUMP) to 2'-deoxythymidine-5'-monophosphate (dTMP) while utilizing 5,10-methylenetetrahydrofolate (mTHF) as the methyl donor and reductant in the reaction, yielding dihydrofolate (DHF) as a by-product. This enzymatic reaction provides an intracellular de novo source of dTMP, an essential precursor for DNA biosynthesis. The chain is Thymidylate synthase from Nocardia farcinica (strain IFM 10152).